A 38-amino-acid polypeptide reads, in one-letter code: MMMFITVYDINQKQKKRYGLRGCNLNLKATVLLLHKRI.

Belongs to the asfivirus C84L family.

This is an uncharacterized protein from Ornithodoros (relapsing fever ticks).